The following is a 122-amino-acid chain: Small ribosomal subunit protein uS13 (122 aa).

Residues 98 to 122 (VRGQRTHTNARTRKGPAKAIAGKKK) form a disordered region.

This sequence belongs to the universal ribosomal protein uS13 family. As to quaternary structure, part of the 30S ribosomal subunit. Forms a loose heterodimer with protein S19. Forms two bridges to the 50S subunit in the 70S ribosome.

Its function is as follows. Located at the top of the head of the 30S subunit, it contacts several helices of the 16S rRNA. In the 70S ribosome it contacts the 23S rRNA (bridge B1a) and protein L5 of the 50S subunit (bridge B1b), connecting the 2 subunits; these bridges are implicated in subunit movement. Contacts the tRNAs in the A and P-sites. The chain is Small ribosomal subunit protein uS13 from Jannaschia sp. (strain CCS1).